The following is a 322-amino-acid chain: L-asparaginase (322 aa).

The 320-residue stretch at 3 to 322 (KKVALITTGG…KEGIKDKFCY (320 aa)) folds into the Asparaginase/glutaminase domain. Catalysis depends on Thr-13, which acts as the O-isoaspartyl threonine intermediate. Residues Ser-56 and 89-90 (TD) contribute to the substrate site.

Belongs to the asparaginase 1 family. Homotetramer.

The protein localises to the cytoplasm. It catalyses the reaction L-asparagine + H2O = L-aspartate + NH4(+). This chain is L-asparaginase (ansA), found in Bacillus licheniformis.